The sequence spans 177 residues: Chorismate pyruvate-lyase (177 aa).

Substrate is bound by residues Met36, Arg78, Leu116, and Glu157.

It belongs to the UbiC family. In terms of assembly, monomer.

It is found in the cytoplasm. It carries out the reaction chorismate = 4-hydroxybenzoate + pyruvate. It participates in cofactor biosynthesis; ubiquinone biosynthesis. In terms of biological role, removes the pyruvyl group from chorismate, with concomitant aromatization of the ring, to provide 4-hydroxybenzoate (4HB) for the ubiquinone pathway. The sequence is that of Chorismate pyruvate-lyase from Pectobacterium carotovorum subsp. carotovorum (strain PC1).